A 132-amino-acid polypeptide reads, in one-letter code: Small ribosomal subunit protein uS8 (132 aa).

This sequence belongs to the universal ribosomal protein uS8 family. Part of the 30S ribosomal subunit. Contacts proteins S5 and S12.

Its function is as follows. One of the primary rRNA binding proteins, it binds directly to 16S rRNA central domain where it helps coordinate assembly of the platform of the 30S subunit. The protein is Small ribosomal subunit protein uS8 of Streptococcus uberis (strain ATCC BAA-854 / 0140J).